Here is a 3674-residue protein sequence, read N- to C-terminus: Dystrophin-1 (3674 aa).

A disordered region spans residues 1 to 25 (MLFSGASTAKPKKDEKKDKKSDRDP). The segment covering 11 to 25 (PKKDEKKDKKSDRDP) has biased composition (basic and acidic residues). The segment at 30–39 (QEWVFVRWAN) is actin-binding. The Calponin-homology (CH) domain maps to 129–234 (EKLSEAIKQW…YLMSLYLAMI (106 aa)). A disordered region spans residues 265–325 (SQPSTSSSSA…KSGKSKKARR (61 aa)). Spectrin repeat units lie at residues 327-435 (EQLA…VLQQ), 436-541 (QIHL…KLDG), and 612-656 (CELV…TLVK). Residues 655–674 (VKSGKADVKQVQESQNEQKE) show a composition bias toward basic and acidic residues. 5 disordered regions span residues 655–689 (VKSG…TEGE), 968–991 (NSQM…EKRR), 1587–1606 (ASAE…SSPS), 1796–1833 (LSAT…SRSS), and 2387–2466 (MNDS…GSTG). The segment covering 675–685 (QPASSEGLSTD) has biased composition (polar residues). A compositionally biased stretch (basic and acidic residues) spans 975–991 (TVEKAETRKAEMEEKRR). Basic and acidic residues predominate over residues 1796 to 1830 (LSATEKKPVETVKSTIPDRPEVPEEPEKSSPDRTS). The span at 2391–2411 (GGDTTESRSTVVEMTSVHTKQ) shows a compositional bias: polar residues. 4 Spectrin repeats span residues 2576 to 2673 (RNEM…VLEA), 2725 to 2789 (FKTL…RLEK), 2792 to 2905 (QEWE…RLKK), and 2926 to 3032 (QRLQ…AVRN). Positions 3047-3081 (QSVTLPWQRAISKSNLLPYYIEQTSEKTQWEHPVW) constitute a WW domain. Residues 3301–3357 (KHASKCNVCKMFPIIGIRYRCLTCFNCDLCQNCFFSQRTAKSHRTNHPMQEYCEKTT) form a ZZ-type zinc finger. 8 residues coordinate Zn(2+): Cys3306, Cys3309, Cys3321, Cys3324, Cys3330, Cys3333, His3343, and His3347. 2 disordered regions span residues 3481–3522 (STME…TQSQ) and 3568–3645 (KQQA…QMQN). The span at 3568 to 3579 (KQQAPLSTNSLL) shows a compositional bias: polar residues.

In terms of assembly, component of the dystrophin glycoprotein complex (DGC). Interacts with dyb-1 and stn-1 to form the DGC. Interacts with stn-2. In terms of tissue distribution, expressed in body wall, head, pharyngeal and vulval muscles, from late embryogenesis to adulthood (at protein level).

It localises to the cell membrane. It is found in the sarcolemma. The protein resides in the cytoplasm. Its subcellular location is the cytoskeleton. Plays a role in cholinergic transmission and as a functional partner of dystrobrevin (dyb-1), necessary for muscle maintenance. Required for neuronal positioning. May play a role in the localization of slo-1 near dense bodies in the muscle. This Caenorhabditis elegans protein is Dystrophin-1 (dys-1).